Here is a 176-residue protein sequence, read N- to C-terminus: Disulfide bond formation protein B (176 aa).

The Cytoplasmic portion of the chain corresponds to 1–14 (MLQFLNRCSKGRGA). Residues 15 to 31 (WLLMALTALVLELVALY) traverse the membrane as a helical segment. Over 32–49 (FQHVMLLQPCVMCIYERA) the chain is Periplasmic. The cysteines at positions 41 and 44 are disulfide-linked. Residues 50-65 (ALFGILGASLLGAIAP) form a helical membrane-spanning segment. At 66-71 (KSPLRY) the chain is on the cytoplasmic side. The chain crosses the membrane as a helical span at residues 72-89 (LAIFIWIYSAWKGVQLAW). The Periplasmic portion of the chain corresponds to 90 to 144 (THTMLQLHPSPFTTCDFFVSFPSWLPLDKWFPAVFVASGDCAVKQWEFLSLEMPQ). The cysteines at positions 104 and 130 are disulfide-linked. Residues 145 to 163 (WLVGIFAAYLFIAILVLIS) form a helical membrane-spanning segment. The Cytoplasmic portion of the chain corresponds to 164–176 (QFVKPKRRDLFSR).

Belongs to the DsbB family.

It localises to the cell inner membrane. In terms of biological role, required for disulfide bond formation in some periplasmic proteins. Acts by oxidizing the DsbA protein. The chain is Disulfide bond formation protein B from Yersinia enterocolitica serotype O:8 / biotype 1B (strain NCTC 13174 / 8081).